The following is a 372-amino-acid chain: Cytochrome b (372 aa).

A run of 4 helical transmembrane segments spans residues 29 to 49, 73 to 95, 108 to 128, and 174 to 194; these read FGSMLGLIYSIQIISGLILSW, WFIRFIHSSGVSLFMFIMYLHIL, VWYSGILLLFICMGSAFLGYV, and FFSFHYLLSLFIMVFILIHLI. Heme b contacts are provided by H79 and H93. Heme b contacts are provided by H178 and H192. H197 is an a ubiquinone binding site. Transmembrane regions (helical) follow at residues 220–240, 284–301, 311–336, and 344–363; these read FSLKDTLVFVLVVFLYWFCIF, LGGVILMVMAILMLVFLG, MVKTLYWKLMLSSFLLVFIILTIMGG, and DILGNVNSVLYFFIYVIMLL.

It belongs to the cytochrome b family. The main subunits of complex b-c1 are: cytochrome b, cytochrome c1 and the Rieske protein. The cofactor is heme b.

It is found in the mitochondrion inner membrane. Its function is as follows. Component of the ubiquinol-cytochrome c reductase complex (complex III or cytochrome b-c1 complex) that is part of the mitochondrial respiratory chain. The b-c1 complex mediates electron transfer from ubiquinol to cytochrome c. Contributes to the generation of a proton gradient across the mitochondrial membrane that is then used for ATP synthesis. The chain is Cytochrome b (mt:Cyt-b) from Leptorhynchoides thecatus (Thorny-headed worm).